Here is a 505-residue protein sequence, read N- to C-terminus: Glycerol kinase (505 aa).

Residue T14 coordinates ADP. Positions 14, 15, and 16 each coordinate ATP. T14 lines the sn-glycerol 3-phosphate pocket. Residue R18 coordinates ADP. Residues R84, E85, Y136, and D246 each coordinate sn-glycerol 3-phosphate. Glycerol contacts are provided by R84, E85, Y136, D246, and Q247. ADP-binding residues include T268 and G311. ATP contacts are provided by T268, G311, Q315, and G412. 2 residues coordinate ADP: G412 and N416.

This sequence belongs to the FGGY kinase family.

The enzyme catalyses glycerol + ATP = sn-glycerol 3-phosphate + ADP + H(+). It functions in the pathway polyol metabolism; glycerol degradation via glycerol kinase pathway; sn-glycerol 3-phosphate from glycerol: step 1/1. With respect to regulation, inhibited by fructose 1,6-bisphosphate (FBP). In terms of biological role, key enzyme in the regulation of glycerol uptake and metabolism. Catalyzes the phosphorylation of glycerol to yield sn-glycerol 3-phosphate. This is Glycerol kinase from Vibrio vulnificus (strain CMCP6).